The primary structure comprises 388 residues: Succinate--CoA ligase [ADP-forming] subunit beta (388 aa).

The ATP-grasp domain occupies 9–244 (KELFRTYGIP…TDEEDPLEVE (236 aa)). Residues lysine 46, 53–55 (GRG), glutamate 99, valine 102, and glutamate 107 contribute to the ATP site. Positions 199 and 213 each coordinate Mg(2+). Substrate is bound by residues asparagine 264 and 321–323 (GIL).

Belongs to the succinate/malate CoA ligase beta subunit family. Heterotetramer of two alpha and two beta subunits. It depends on Mg(2+) as a cofactor.

It carries out the reaction succinate + ATP + CoA = succinyl-CoA + ADP + phosphate. The enzyme catalyses GTP + succinate + CoA = succinyl-CoA + GDP + phosphate. Its pathway is carbohydrate metabolism; tricarboxylic acid cycle; succinate from succinyl-CoA (ligase route): step 1/1. Its function is as follows. Succinyl-CoA synthetase functions in the citric acid cycle (TCA), coupling the hydrolysis of succinyl-CoA to the synthesis of either ATP or GTP and thus represents the only step of substrate-level phosphorylation in the TCA. The beta subunit provides nucleotide specificity of the enzyme and binds the substrate succinate, while the binding sites for coenzyme A and phosphate are found in the alpha subunit. This chain is Succinate--CoA ligase [ADP-forming] subunit beta, found in Desulfosudis oleivorans (strain DSM 6200 / JCM 39069 / Hxd3) (Desulfococcus oleovorans).